The primary structure comprises 931 residues: Netrin receptor UNC5C (931 aa).

A signal peptide spans 1-40 (MRKGLRATAARCGLGLGYLLQMLVLPALALLSASGTGSAA). Topologically, residues 41–380 (QDDEFFHELP…APDSDDVALY (340 aa)) are extracellular. Residues 62–159 (PHFLIEPEEA…AGTTKSRKAY (98 aa)) form the Ig-like domain. 9 cysteine pairs are disulfide-bonded: cysteine 83/cysteine 144, cysteine 95/cysteine 142, cysteine 188/cysteine 239, cysteine 272/cysteine 309, cysteine 276/cysteine 313, cysteine 287/cysteine 299, cysteine 328/cysteine 362, cysteine 332/cysteine 367, and cysteine 340/cysteine 352. Residues 161 to 256 (RIAYLRKTFE…KRKSTTATVI (96 aa)) form the Ig-like C2-type domain. N-linked (GlcNAc...) asparagine glycosylation is present at asparagine 236. 2 TSP type-1 domains span residues 260–314 (NGGW…TLCP) and 316–368 (DGRW…GLCM). Residue asparagine 361 is glycosylated (N-linked (GlcNAc...) asparagine). The helical transmembrane segment at 381-401 (VGIVIAVTVCLAITVVVALFV) threads the bilayer. The Cytoplasmic segment spans residues 402–931 (YRKNHRDFES…VVSLAAEGQY (530 aa)). The tract at residues 402–931 (YRKNHRDFES…VVSLAAEGQY (530 aa)) is required for netrin-mediated axon repulsion of neuronal growth cones. Serine 502 bears the Phosphoserine mark. The region spanning 530–673 (CTAFGTFNSL…LSTYALVGQS (144 aa)) is the ZU5 domain. At tyrosine 568 the chain carries Phosphotyrosine. The interval 694–712 (SLEYSIRVYCLDDTQDALK) is interaction with DCC. In terms of domain architecture, Death spans 850–929 (QKLCSSLDAP…ETVVSLAAEG (80 aa)).

This sequence belongs to the unc-5 family. In terms of assembly, interacts with DCC (via cytoplasmic domain). Interacts (tyrosine phosphorylated form) with PTPN11. Interacts (via extracellular domain) with FLRT3 (via extracellular domain). Interacts (via Ig-like C2-type domain) with DSCAM (via extracellular domain). Interacts (via death domain) with DAPK1. Interacts (via cytoplasmic domain) with TUBB3; this interaction is decreased by NTN1/Netrin-1. In terms of processing, phosphorylated on different cytoplasmic tyrosine residues. Phosphorylation of Tyr-568 leads to an interaction with PTPN11 phosphatase, suggesting that its activity is regulated by phosphorylation/dephosphorylation. Tyrosine phosphorylation is netrin-dependent. Proteolytically cleaved by caspases during apoptosis. The cleavage does not take place when the receptor is associated with netrin ligand. Its cleavage by caspases is required to induce apoptosis. Expressed in cortical and cerebellar neurons, including cells of the external and internal granular layer and of the Purkinje cell layer (at protein level). Mainly expressed in regions of differentiating neurons. Highly expressed in brain and lung. Expressed in the cerebellum and the neurons of the hippocampus, with enrichment in neurons of the CA3 hippocampal pyramidal layer. Weakly expressed in testis, ovary, spleen, thymus and bladder. Expressed at very low level in kidney, intestine and salivary gland.

The protein resides in the cell membrane. Its subcellular location is the cell surface. It localises to the synapse. It is found in the synaptosome. The protein localises to the cell projection. The protein resides in the dendrite. Its subcellular location is the axon. It localises to the growth cone. It is found in the lamellipodium. The protein localises to the filopodium. Functionally, receptor for netrin required for axon guidance. Mediates axon repulsion of neuronal growth cones in the developing nervous system upon ligand binding. NTN1/Netrin-1 binding might cause dissociation of UNC5C from polymerized TUBB3 in microtubules and thereby lead to increased microtubule dynamics and axon repulsion. Axon repulsion in growth cones may also be caused by its association with DCC that may trigger signaling for repulsion. Might also collaborate with DSCAM in NTN1-mediated axon repulsion independently of DCC. Also involved in corticospinal tract axon guidance independently of DCC. Involved in dorsal root ganglion axon projection towards the spinal cord. It also acts as a dependence receptor required for apoptosis induction when not associated with netrin ligand. This Mus musculus (Mouse) protein is Netrin receptor UNC5C (Unc5c).